Consider the following 155-residue polypeptide: Rusticyanin (155 aa).

One can recognise a Plastocyanin-like domain in the interval 53-155 (SFEVHDKKNP…TGMFGKIIVK (103 aa)). Cu cation contacts are provided by His85, Cys138, His143, and Met148.

In terms of assembly, monomer. Cu cation is required as a cofactor.

It localises to the periplasm. Its function is as follows. Electron carrier from cytochrome c552 to the A-type oxidase. In Acidithiobacillus ferrooxidans (Thiobacillus ferrooxidans), this protein is Rusticyanin (rus).